Here is a 258-residue protein sequence, read N- to C-terminus: Mediator of RNA polymerase II transcription subunit 7 (258 aa).

Disordered stretches follow at residues M1 to H39 and E202 to V243. Residues K203–E217 show a composition bias toward acidic residues. A compositionally biased stretch (polar residues) spans S220–K229.

The protein belongs to the Mediator complex subunit 7 family. As to quaternary structure, component of the Mediator complex.

The protein localises to the nucleus. Its function is as follows. Component of the Mediator complex, a coactivator involved in the regulated transcription of nearly all RNA polymerase II-dependent genes. Mediator functions as a bridge to convey information from gene-specific regulatory proteins to the basal RNA polymerase II transcription machinery. Mediator is recruited to promoters by direct interactions with regulatory proteins and serves as a scaffold for the assembly of a functional preinitiation complex with RNA polymerase II and the general transcription factors. This is Mediator of RNA polymerase II transcription subunit 7 (let-49) from Caenorhabditis briggsae.